The chain runs to 23 residues: Dahlein-4.2 (23 aa).

As to expression, expressed by the skin dorsal glands.

The protein localises to the secreted. Its function is as follows. Has no antimicrobial activity. In Ranoidea dahlii (Dahl's aquatic frog), this protein is Dahlein-4.2.